The sequence spans 198 residues: Protein LKAAEAR1 (198 aa).

A disordered region spans residues 1–47 (MPTLGVKGARERDKNSASGAGAGAGAGAGAGEKHRKGPRTTDPPKTG). A compositionally biased stretch (gly residues) spans 20-30 (AGAGAGAGAGA).

This is Protein LKAAEAR1 (Lkaaear1) from Mus musculus (Mouse).